A 517-amino-acid chain; its full sequence is Bifunctional purine biosynthesis protein PurH (517 aa).

The MGS-like domain occupies 1–145 (MSPLALVSVS…KNHKDVSVLV (145 aa)).

The protein belongs to the PurH family.

It carries out the reaction (6R)-10-formyltetrahydrofolate + 5-amino-1-(5-phospho-beta-D-ribosyl)imidazole-4-carboxamide = 5-formamido-1-(5-phospho-D-ribosyl)imidazole-4-carboxamide + (6S)-5,6,7,8-tetrahydrofolate. It catalyses the reaction IMP + H2O = 5-formamido-1-(5-phospho-D-ribosyl)imidazole-4-carboxamide. The protein operates within purine metabolism; IMP biosynthesis via de novo pathway; 5-formamido-1-(5-phospho-D-ribosyl)imidazole-4-carboxamide from 5-amino-1-(5-phospho-D-ribosyl)imidazole-4-carboxamide (10-formyl THF route): step 1/1. It functions in the pathway purine metabolism; IMP biosynthesis via de novo pathway; IMP from 5-formamido-1-(5-phospho-D-ribosyl)imidazole-4-carboxamide: step 1/1. The protein is Bifunctional purine biosynthesis protein PurH of Prochlorococcus marinus subsp. pastoris (strain CCMP1986 / NIES-2087 / MED4).